Here is a 100-residue protein sequence, read N- to C-terminus: MFNRNLRAVILKNYNKALTRCLHDAGNLKRPTPPRLPKEQQEEWDRLQKESSKRPVDVMRREKHKDFEGDVNPKTGEIGGPKSEPTVHGDYSYEGRVTDF.

Residues 1–31 constitute a mitochondrion transit peptide; it reads MFNRNLRAVILKNYNKALTRCLHDAGNLKRP. The tract at residues 24–100 is disordered; the sequence is DAGNLKRPTP…YSYEGRVTDF (77 aa). Composition is skewed to basic and acidic residues over residues 36 to 68 and 85 to 100; these read LPKE…KDFE and PTVH…VTDF.

Belongs to the SDHAF4 family. Interacts with sdh1 in its FAD-bound form.

The protein localises to the mitochondrion matrix. In terms of biological role, plays an essential role in the assembly of succinate dehydrogenase (SDH), an enzyme complex (also referred to as respiratory complex II) that is a component of both the tricarboxylic acid (TCA) cycle and the mitochondrial electron transport chain, and which couples the oxidation of succinate to fumarate with the reduction of ubiquinone (coenzyme Q) to ubiquinol. Binds to the flavoprotein subunit sdh1 in its FAD-bound form, blocking the generation of excess reactive oxygen species (ROS) and facilitating its assembly with the iron-sulfur protein subunit sdh2 into the SDH catalytic dimer. The polypeptide is Succinate dehydrogenase assembly factor 4, mitochondrial (Schizosaccharomyces pombe (strain 972 / ATCC 24843) (Fission yeast)).